Here is a 486-residue protein sequence, read N- to C-terminus: Hematopoietic lineage cell-specific protein (486 aa).

The tract at residues 27–66 (FVNDISEKEQRWGAKTIEGSGRTEHINIHQLRNKVSEEHD) is involved in HAX-1 binding. Lys-41 bears the N6-acetyllysine mark. Cortactin repeat units follow at residues 79–115 (ASHGYGGRFGVERDRMDKSAVGHEYVADVEKHSSQTD), 116–152 (AARGFGGKYGVERDRADKSAVGFDYKGEVEKHASQKD), and 153–189 (YSHGFGGRYGVEKDKRDKAALGYDYKGETEKHESQRD). Lys-123 bears the N6-acetyllysine mark. Tyr-140 is modified (phosphotyrosine). Residues 190–212 (YAKGFGGQYGIQKDRVDKSAVGF) form a Cortactin 4; truncated repeat. An N6-acetyllysine modification is found at Lys-192. The residue at position 198 (Tyr-198) is a Phosphotyrosine. Tyr-222 bears the Phosphotyrosine; by FGR mark. Positions 226–430 (TPIEAASSGA…AGPSAGAGGA (205 aa)) are disordered. 2 stretches are compositionally biased toward basic and acidic residues: residues 240–258 (AKFESLAEEKRKREEEEKA) and 265–276 (QQERKAVVKMSR). Position 241 is an N6-acetyllysine (Lys-241). Ser-275 is subject to Phosphoserine. Phosphothreonine is present on Thr-330. Ser-333 is subject to Phosphoserine. Low complexity predominate over residues 358–367 (VVEEPVYEAA). Residues 368–413 (PELEPEPEPDYEPEPETEPDYEDVGELDRQDEDAEGDYEDVLEPED) show a composition bias toward acidic residues. Tyr-388 and Tyr-405 each carry phosphotyrosine; by SYK and FES. Residues 429-486 (GAGISAIALYDYQGEGSDELSFDPDDIITDIEMVDEGWWRGQCRGHFGLFPANYVKLL) form the SH3 domain.

In terms of assembly, interacts (via SH2 domain) with FGR. Associates with the SH2 and SH3 domains of LCK. Binding to he LCK SH3 domain occurs constitutively, while binding to the LCK SH2 domain occurs only upon TCR stimulation. A similar binding pattern was observed with LYN, but not with FYN in which the FYN SH2 region associates upon TCR stimulation but the FYN SH3 region does not associate regardless of TCR stimulation. Directly associates with HAX1, through binding to its C-terminal region. Interacts with HS1BP3. Interacts with FES/FPS. Forms a multiprotein complex with LYN and ANKRD54. In terms of processing, phosphorylated by LYN, FYN and FGR after cross-linking of surface IgM on B-cells. Phosphorylation by LYN, FYN and FGR requires prior phosphorylation by SYK. Binds to LCK in vivo, and is tyrosine phosphorylated upon TCR stimulation. Phosphorylated by FES. Expressed only in tissues and cells of hematopoietic origin.

It is found in the mitochondrion. Functionally, substrate of the antigen receptor-coupled tyrosine kinase. Plays a role in antigen receptor signaling for both clonal expansion and deletion in lymphoid cells. May also be involved in the regulation of gene expression. This Mus musculus (Mouse) protein is Hematopoietic lineage cell-specific protein (Hcls1).